The chain runs to 580 residues: MRPLGALSLFALLATTVSGLAIREPDAKDWYQHATFYQIYPRSFLDSNGDGIGDLAGITSKMKYLADIGIDATWLSPPFKSPLKDFGYDVSDFYAIQPEYGNLTDFDKLVEEAHKNGIKLMLDFIPNHSSDQHEWFVKSVARDPEYSEFYVWKPPATGGGPPNNWISVFGGPAWTYNAARGEYYLHQFTPQQPDLNYRNPKLLAEMTKMLFFWLDRGVDGFRLDAINHMFEDEQFRDEPVSGWGQPGEYDSLDHIYTKDIPDVYNVVYNWRDQMDKYSAEKGRTIILMTEAYSSIEGTMLYYESADRKRQGAHMPFNFQLIYDFKKEQNAVGLKSSIDWWMNNMPARHTPSWVAGSHDHSRVASRVGLDRVDQVMTLMHTLPGTSITYYGEEVAMQDFKEAQQFDNRDPNRTPMQWDSSTSAGFSTNTNTWLRVHPDYARYNVDVMQKNPQSTFHHFQHLTKLRGHRTMQSGEYVHKTVGTKVYALLRELRGEDSFLTVLNMAGAEDTVDLGDFVNLPQKMRVEVAQPNSKSKAGNEVDISKLTLGPYDSVVLRATVSSAAAINLSIGLLLAIMARYIFV.

The N-terminal stretch at 1–19 (MRPLGALSLFALLATTVSG) is a signal peptide. 2 N-linked (GlcNAc...) asparagine glycosylation sites follow: N102 and N127. Catalysis depends on D224, which acts as the Nucleophile. E290 functions as the Proton donor in the catalytic mechanism. The N-linked (GlcNAc...) asparagine glycan is linked to N501. A helical membrane pass occupies residues 560-580 (AAAINLSIGLLLAIMARYIFV).

Belongs to the glycosyl hydrolase 13 family. (Microbial infection) Binds to L.sphaericus BinB subunit of the binary toxin BinAB. As to expression, in 4th-instar larvae produced in the brush border membranes of the gastric caeca and the posterior stomach cells (at protein level).

The protein resides in the membrane. It carries out the reaction Hydrolysis of terminal, non-reducing (1-&gt;4)-linked alpha-D-glucose residues with release of alpha-D-glucose.. In terms of biological role, probably an alpha-glucosidase, it has no alpha-amylase function. Its function is as follows. (Microbial infection) Serves as the larval receptor for Lysinibacillus sphaericus BinB toxin. In Culex pipiens (House mosquito), this protein is Alpha-glucosidase.